Consider the following 117-residue polypeptide: Large ribosomal subunit protein bL20 (117 aa).

Belongs to the bacterial ribosomal protein bL20 family.

Binds directly to 23S ribosomal RNA and is necessary for the in vitro assembly process of the 50S ribosomal subunit. It is not involved in the protein synthesizing functions of that subunit. The polypeptide is Large ribosomal subunit protein bL20 (Vibrio metschnikovii).